We begin with the raw amino-acid sequence, 108 residues long: uncharacterized protein (108 aa).

The disordered stretch occupies residues 81-108; that stretch reads FKCLDSPPPVPPSSSQGEDEENTVDSQY. The span at 97 to 108 shows a compositional bias: acidic residues; sequence GEDEENTVDSQY.

This is an uncharacterized protein from Saccharomyces cerevisiae (strain ATCC 204508 / S288c) (Baker's yeast).